The primary structure comprises 287 residues: MAVGKEIRIKIASVRNTQKITRAMEMVAASKMRRTQDRLQATRPYARKIARIIKHLAQANPEYKNPFMVERPVKRVGVVLVSSDRGLCGGLNSNLFRLLLRRMRAWGEAGVEVRLGVIGQKGASFFGGVGADVAAQVVRLGDTPHLEGIIGVLKVMLDAYGEGEIDELYVAHNEFVNTMTQKPKLECLAPIKAEELSDELKGHWDYLYEPDAKTVLDALITRYIESLVFQGLVENNACEQAARMVAMKSASDNAGKLIKELQLIYNKARQAAITQEIAEIVGGAAAV.

Belongs to the ATPase gamma chain family. As to quaternary structure, F-type ATPases have 2 components, CF(1) - the catalytic core - and CF(0) - the membrane proton channel. CF(1) has five subunits: alpha(3), beta(3), gamma(1), delta(1), epsilon(1). CF(0) has three main subunits: a, b and c.

It localises to the cell inner membrane. Its function is as follows. Produces ATP from ADP in the presence of a proton gradient across the membrane. The gamma chain is believed to be important in regulating ATPase activity and the flow of protons through the CF(0) complex. The polypeptide is ATP synthase gamma chain (Methylococcus capsulatus (strain ATCC 33009 / NCIMB 11132 / Bath)).